We begin with the raw amino-acid sequence, 170 residues long: MAAEEKDPLSYFAAYGSSSSDSESSDEEKEAERSKNRSIKRPFPTDTKKLPGPDELFRNVSRPAFLYNPLNKQIDWESRVKRAPEEPPKEFKVWKTNAVPPPESYQVAEKKAPPPELDMAIKWSNVYQDNGDDAPHANQAKSLEEEEAREDSPPSDDEQEKAFAIKKRKV.

2 disordered regions span residues 1–56 (MAAE…PDEL) and 124–170 (SNVY…KRKV). The segment covering 46–56 (DTKKLPGPDEL) has biased composition (basic and acidic residues). The segment covering 144 to 159 (EEEEAREDSPPSDDEQ) has biased composition (acidic residues).

This sequence belongs to the UPF0690 family.

The chain is UPF0690 protein C1orf52 homolog from Xenopus tropicalis (Western clawed frog).